A 406-amino-acid chain; its full sequence is Sensor histidine kinase YxjM (406 aa).

Residues 1–13 lie on the Cytoplasmic side of the membrane; it reads MNGQTPARHYYKK. Residues 14-34 form a helical membrane-spanning segment; the sequence is LVPSLILILNCIQFLSHPTKA. Residues 35–36 are Extracellular-facing; that stretch reads DP. The chain crosses the membrane as a helical span at residues 37–57; that stretch reads ILLAFVFAVYLAFIWIIPYVA. Residue Ser58 is a topological domain, cytoplasmic. Transmembrane regions (helical) follow at residues 59–79 and 80–100; these read TAVSLSIFIGLWLLTDFFWAV and SGQEQGAAYFLIVFLMIYAAF. Arg101 is a topological domain (cytoplasmic). Residues 102–122 form a helical membrane-spanning segment; sequence LPSRLSLIFTACLIGGNILLL. At 123–125 the chain is on the extracellular side; that stretch reads SSQ. The helical transmembrane segment at 126–146 threads the bilayer; the sequence is GGSLNTIISNISIMLGLYVLF. The Cytoplasmic portion of the chain corresponds to 147-406; that stretch reads SSMRFRREAR…TNKEQKDEQR (260 aa). Positions 209–396 constitute a Histidine kinase domain; sequence DIHDSIGHEL…KIELSLPLMT (188 aa). Residue His211 is modified to Phosphohistidine; by autocatalysis.

It localises to the cell membrane. It catalyses the reaction ATP + protein L-histidine = ADP + protein N-phospho-L-histidine.. Its function is as follows. Probable member of the two-component regulatory system YxjM/YxjL. May activate YxjL by phosphorylation. The chain is Sensor histidine kinase YxjM (yxjM) from Bacillus subtilis (strain 168).